A 358-amino-acid polypeptide reads, in one-letter code: Phospho-N-acetylmuramoyl-pentapeptide-transferase (358 aa).

The next 10 helical transmembrane spans lie at 26–46 (AIYATITALMIAFILGPWLID), 70–90 (GTPTMGGTLILLAIVLPTLLW), 94–114 (TNVYVWVTLLVTVGFGAVGFV), 134–154 (MLWLMLIAGTAGVMLYSYPPF), 169–189 (ELGLFYIPFAVLVIVGASNAV), 197–217 (GLAIGPTIIASGTYLLFAYLA), 234–254 (AGELAVLCGAMVGAGLGFLWF), 261–281 (VFMGDVGSLSLGGALGTIAVI), 286–306 (IVLVIVGGIFVVEALSVIVQV), and 335–355 (KIIVRFWIISIILALVALSTL).

It belongs to the glycosyltransferase 4 family. MraY subfamily. Mg(2+) serves as cofactor.

It is found in the cell inner membrane. It carries out the reaction UDP-N-acetyl-alpha-D-muramoyl-L-alanyl-gamma-D-glutamyl-meso-2,6-diaminopimeloyl-D-alanyl-D-alanine + di-trans,octa-cis-undecaprenyl phosphate = di-trans,octa-cis-undecaprenyl diphospho-N-acetyl-alpha-D-muramoyl-L-alanyl-D-glutamyl-meso-2,6-diaminopimeloyl-D-alanyl-D-alanine + UMP. The protein operates within cell wall biogenesis; peptidoglycan biosynthesis. Its function is as follows. Catalyzes the initial step of the lipid cycle reactions in the biosynthesis of the cell wall peptidoglycan: transfers peptidoglycan precursor phospho-MurNAc-pentapeptide from UDP-MurNAc-pentapeptide onto the lipid carrier undecaprenyl phosphate, yielding undecaprenyl-pyrophosphoryl-MurNAc-pentapeptide, known as lipid I. The protein is Phospho-N-acetylmuramoyl-pentapeptide-transferase of Syntrophotalea carbinolica (strain DSM 2380 / NBRC 103641 / GraBd1) (Pelobacter carbinolicus).